The sequence spans 587 residues: Mitogen-activated protein kinase 4 (587 aa).

A Protein kinase domain is found at 20–312; it reads FVDFQPLGFG…AEMGLQHPYM (293 aa). ATP-binding positions include 26–34 and Lys-49; that span reads LGFGVNGLV. Asp-149 functions as the Proton acceptor in the catalytic mechanism. Ser-186 carries the post-translational modification Phosphoserine; by PAK1, PAK2 and PAK3. The SEG motif motif lies at 186-188; it reads SEG. The FRIEDE motif signature appears at 328–333; that stretch reads FRIEDE. Composition is skewed to basic and acidic residues over residues 373–383 and 395–413; these read QDASEVQRDPR and VDPR…EQSH. Residues 373–413 form a disordered region; the sequence is QDASEVQRDPRAGSAPLAEDVQVDPRKDSHSSSERFLEQSH. Position 434 is a phosphoserine (Ser-434). The disordered stretch occupies residues 499 to 534; that stretch reads STQGGPEHASPPADDPERRLSASPPGRPAPVDGGAS.

It belongs to the protein kinase superfamily. CMGC Ser/Thr protein kinase family. MAP kinase subfamily. In terms of assembly, homodimer. Heterodimer with ERK3/MAPK6. Interacts with (via FRIEDE motif) MAPKAPK5. Mg(2+) is required as a cofactor. Phosphorylated at Ser-186 by PAK1, PAK2 and PAK3 resulting in catalytic activation. Phosphorylated by MAPKAPK5 at other sites. In terms of tissue distribution, high expression in heart and brain.

It localises to the cytoplasm. The protein localises to the nucleus. The catalysed reaction is L-seryl-[protein] + ATP = O-phospho-L-seryl-[protein] + ADP + H(+). The enzyme catalyses L-threonyl-[protein] + ATP = O-phospho-L-threonyl-[protein] + ADP + H(+). With respect to regulation, activated by phosphorylation at Ser-186. Functionally, atypical MAPK protein. Phosphorylates microtubule-associated protein 2 (MAP2) and MAPKAPK5. The precise role of the complex formed with MAPKAPK5 is still unclear, but the complex follows a complex set of phosphorylation events: upon interaction with atypical MAPKAPK5, ERK4/MAPK4 is phosphorylated at Ser-186 and then mediates phosphorylation and activation of MAPKAPK5, which in turn phosphorylates ERK4/MAPK4. May promote entry in the cell cycle. This is Mitogen-activated protein kinase 4 (MAPK4) from Homo sapiens (Human).